Reading from the N-terminus, the 195-residue chain is dTTP/UTP pyrophosphatase (195 aa).

Residue Asp-70 is the Proton acceptor of the active site.

It belongs to the Maf family. YhdE subfamily. A divalent metal cation is required as a cofactor.

The protein resides in the cytoplasm. The enzyme catalyses dTTP + H2O = dTMP + diphosphate + H(+). It catalyses the reaction UTP + H2O = UMP + diphosphate + H(+). Functionally, nucleoside triphosphate pyrophosphatase that hydrolyzes dTTP and UTP. May have a dual role in cell division arrest and in preventing the incorporation of modified nucleotides into cellular nucleic acids. The protein is dTTP/UTP pyrophosphatase of Methanococcoides burtonii (strain DSM 6242 / NBRC 107633 / OCM 468 / ACE-M).